The chain runs to 201 residues: Ras-related protein Rab-1B (201 aa).

The residue at position 1 (Met-1) is an N-acetylmethionine. Ser-17, Gly-18, Val-19, Gly-20, Lys-21, Ser-22, Cys-23, Tyr-33, Thr-34, Glu-35, Ser-36, Ser-39, and Thr-40 together coordinate GTP. Ser-22 contributes to the Mg(2+) binding site. Residues 30-45 carry the Switch 1 motif; it reads DDTYTESYISTIGVDF. The Mg(2+) site is built by Thr-40 and Asp-63. Positions 64-83 are switch 2 region; required for interaction with REP1/CHM; that stretch reads TAGQERFRTITSSYYRGAHG. Positions 65 to 80 match the Switch 2 motif; the sequence is AGQERFRTITSSYYRG. 7 residues coordinate GTP: Gly-66, Asn-121, Lys-122, Asp-124, Ser-151, Ala-152, and Lys-153. The interval 174 to 201 is disordered; it reads GPGAASGGERPNLKIDSTPVKPASGGCC. S-geranylgeranyl cysteine attachment occurs at residues Cys-200 and Cys-201. The residue at position 201 (Cys-201) is a Cysteine methyl ester.

It belongs to the small GTPase superfamily. Rab family. As to quaternary structure, interacts with MICAL1 and MICAL2. Interacts (GTP-bound form) with MICALCL, MICAL1 and MILCAL3. Interacts with GDI1; the interaction requires the GDP-bound state. Interacts with CHM/REP1; the interaction requires the GDP-bound form and is necessary for prenylation by GGTase II. Interacts with RabGAP TBC1D20. Interacts (in GDP-bound form) with lipid phosphatase MTMR6 (via GRAM domain); the interaction regulates MTMR6 recruitment to the endoplasmic reticulum-Golgi intermediate compartment. Interacts (in GDP-bound form) with lipid phosphatase MTMR7. Mg(2+) is required as a cofactor. In terms of processing, prenylated; by GGTase II, only after interaction of the substrate with Rab escort protein 1 (REP1).

It localises to the cytoplasm. The protein localises to the membrane. The protein resides in the preautophagosomal structure membrane. It is found in the perinuclear region. The catalysed reaction is GTP + H2O = GDP + phosphate + H(+). Regulated by guanine nucleotide exchange factors (GEFs) which promote the exchange of bound GDP for free GTP. Regulated by GTPase activating proteins (GAPs) including TBC1D20 which increases the GTP hydrolysis activity. Inhibited by GDP dissociation inhibitors (GDIs). In terms of biological role, the small GTPases Rab are key regulators of intracellular membrane trafficking, from the formation of transport vesicles to their fusion with membranes. Rabs cycle between an inactive GDP-bound form and an active GTP-bound form that is able to recruit to membranes different set of downstream effectors directly responsible for vesicle formation, movement, tethering and fusion. Plays a role in the initial events of the autophagic vacuole development which take place at specialized regions of the endoplasmic reticulum. Regulates vesicular transport between the endoplasmic reticulum and successive Golgi compartments. Required to modulate the compacted morphology of the Golgi. Promotes the recruitment of lipid phosphatase MTMR6 to the endoplasmic reticulum-Golgi intermediate compartment. In Mus musculus (Mouse), this protein is Ras-related protein Rab-1B (Rab1b).